The primary structure comprises 131 residues: Glycine cleavage system H protein (131 aa).

One can recognise a Lipoyl-binding domain in the interval 24–106; that stretch reads RVTVGISDHA…YGEGWIFVVE (83 aa). An N6-lipoyllysine modification is found at Lys65.

The protein belongs to the GcvH family. In terms of assembly, the glycine cleavage system is composed of four proteins: P, T, L and H. Requires (R)-lipoate as cofactor.

Functionally, the glycine cleavage system catalyzes the degradation of glycine. The H protein shuttles the methylamine group of glycine from the P protein to the T protein. This Xanthomonas euvesicatoria pv. vesicatoria (strain 85-10) (Xanthomonas campestris pv. vesicatoria) protein is Glycine cleavage system H protein.